We begin with the raw amino-acid sequence, 207 residues long: LexA repressor (207 aa).

Residues 28–48 (RAEIARELGFRSANAAEEHLK) constitute a DNA-binding region (H-T-H motif). Catalysis depends on for autocatalytic cleavage activity residues Ser-124 and Lys-161.

This sequence belongs to the peptidase S24 family. As to quaternary structure, homodimer.

The enzyme catalyses Hydrolysis of Ala-|-Gly bond in repressor LexA.. In terms of biological role, represses a number of genes involved in the response to DNA damage (SOS response), including recA and lexA. In the presence of single-stranded DNA, RecA interacts with LexA causing an autocatalytic cleavage which disrupts the DNA-binding part of LexA, leading to derepression of the SOS regulon and eventually DNA repair. The protein is LexA repressor of Vibrio vulnificus (strain CMCP6).